Consider the following 397-residue polypeptide: Erythromycin C-12 hydroxylase (397 aa).

Substrate is bound at residue 74-75 (HE). Heme is bound by residues H81 and R85. Q278 is a substrate binding site. R279 provides a ligand contact to heme. Residues 307-322 (RDSDAHDDPDRFDPSR) are compositionally biased toward basic and acidic residues. The tract at residues 307-326 (RDSDAHDDPDRFDPSRKSGG) is disordered. Heme contacts are provided by H337 and C339.

Belongs to the cytochrome P450 family. Monomer. Requires heme b as cofactor.

It catalyses the reaction erythromycin D + NADPH + O2 + H(+) = erythromycin C + NADP(+) + H2O. It participates in antibiotic biosynthesis; erythromycin biosynthesis. In terms of biological role, responsible for the C-12 hydroxylation of the macrolactone ring of erythromycin. Thus, EryK catalyzes the hydroxylation of erythromycin D (ErD) at the C-12 position to produce erythromycin C (ErC). Erythromycin B (ErB) is not a substrate for this enzyme. In Saccharopolyspora erythraea (strain ATCC 11635 / DSM 40517 / JCM 4748 / NBRC 13426 / NCIMB 8594 / NRRL 2338), this protein is Erythromycin C-12 hydroxylase (eryK).